A 498-amino-acid chain; its full sequence is Histidine--tRNA ligase (498 aa).

The protein belongs to the class-II aminoacyl-tRNA synthetase family. Homodimer.

It is found in the cytoplasm. It carries out the reaction tRNA(His) + L-histidine + ATP = L-histidyl-tRNA(His) + AMP + diphosphate + H(+). This Mycoplasmopsis synoviae (strain 53) (Mycoplasma synoviae) protein is Histidine--tRNA ligase.